The primary structure comprises 231 residues: Protein usf (231 aa).

This chain is Protein usf (usf), found in Aquifex pyrophilus.